A 720-amino-acid polypeptide reads, in one-letter code: Biotin biosynthesis bifunctional protein BioWF (720 aa).

Residues 1-39 form a disordered region; the sequence is MRFSIKMRASARVSSSPSTSDGSSGDHTESRDRADRHIS. A compositionally biased stretch (low complexity) spans 8–23; it reads RASARVSSSPSTSDGS. Residues 24 to 39 show a composition bias toward basic and acidic residues; that stretch reads SGDHTESRDRADRHIS. R314 is a binding site for substrate. 401 to 402 contributes to the pyridoxal 5'-phosphate binding site; it reads GY. Position 439 (H439) interacts with substrate. Residues S488, 513–516, and 564–567 contribute to the pyridoxal 5'-phosphate site; these read DDAH and TASK. K567 carries the N6-(pyridoxal phosphate)lysine modification. T684 contacts substrate.

In the N-terminal section; belongs to the BioW family. This sequence in the C-terminal section; belongs to the class-II pyridoxal-phosphate-dependent aminotransferase family. BioF subfamily. In terms of assembly, homodimer. Requires Mg(2+) as cofactor. The cofactor is pyridoxal 5'-phosphate.

The enzyme catalyses heptanedioate + ATP + CoA = 6-carboxyhexanoyl-CoA + AMP + diphosphate. It carries out the reaction 6-carboxyhexanoyl-[ACP] + L-alanine + H(+) = (8S)-8-amino-7-oxononanoate + holo-[ACP] + CO2. It functions in the pathway metabolic intermediate metabolism; pimeloyl-CoA biosynthesis; pimeloyl-CoA from pimelate: step 1/1. The protein operates within cofactor biosynthesis; biotin biosynthesis. Its function is as follows. Catalyzes both the decarboxylative condensation of pimeloyl-[acyl-carrier protein] and L-alanine to produce 8-amino-7-oxononanoate (AON), [acyl-carrier protein], and carbon dioxide, and the transformation of pimelate into pimeloyl-CoA with concomitant hydrolysis of ATP to AMP. In Corynebacterium kroppenstedtii (strain DSM 44385 / JCM 11950 / CIP 105744 / CCUG 35717), this protein is Biotin biosynthesis bifunctional protein BioWF (bioWF).